The primary structure comprises 1342 residues: WD repeat-containing protein 19 (1342 aa).

WD repeat units follow at residues Thr-11–Ile-51, Asn-52–Leu-92, Gly-95–Val-134, Lys-137–Thr-175, Asn-273–Val-311, and Glu-317–Ala-356. TPR repeat units lie at residues Ala-736–Leu-769, Pro-775–Glu-808, Arg-840–Ala-873, Pro-895–Ile-928, Leu-951–Phe-984, and Glu-1020–Val-1053.

Component of the IFT complex A (IFT-A) complex. IFT-A complex is divided into a core subcomplex composed of IFT122:IFT140:WDR19 which is associated with TULP3 and a peripheral subcomplex composed of IFT43:WDR35:TTC21B. Interacts (via C-terminal region) with IFT122 (via C-terminal region). Interacts with BBS1. Interacts with TTC25. In terms of tissue distribution, some isoforms are tissue-specific. Highly expressed in the prostate. Lower expression in the cerebellum, pituitary gland, fetal lung, and pancreas. In normal prostate, expressed in both basal and luminal epithelial cells. No expression detected in fibromuscular stromal cells, endothelial cells, or infiltrating lymphocytes. Uniformed expression in prostate adenocarcinoma cells.

The protein resides in the cell projection. It is found in the cilium. The protein localises to the cytoplasm. Its subcellular location is the cytoskeleton. It localises to the cilium basal body. The protein resides in the photoreceptor outer segment. It is found in the flagellum. As component of the IFT complex A (IFT-A), a complex required for retrograde ciliary transport and entry into cilia of G protein-coupled receptors (GPCRs), it is involved in cilia function and/or assembly. Essential for functional IFT-A assembly and ciliary entry of GPCRs. Associates with the BBSome complex to mediate ciliary transport. The protein is WD repeat-containing protein 19 of Homo sapiens (Human).